The primary structure comprises 855 residues: Suppressor of tumorigenicity 14 protein homolog (855 aa).

Residues 1–21 form a disordered region; that stretch reads MKSERARRGAGGSGDLGAGFK. Residues 1 to 55 lie on the Cytoplasmic side of the membrane; it reads MKSERARRGAGGSGDLGAGFKYTSRPENMNGCEEGVEFLPANNSSKVEKGGPRRW. The residue at position 13 (S13) is a Phosphoserine. A helical; Signal-anchor for type II membrane protein transmembrane segment spans residues 56–76; the sequence is VVLMAVLAAFLALSLLAGLLA. Topologically, residues 77–855 are extracellular; sequence WHFQDRNVRV…RDWIKAQIGV (779 aa). An SEA domain is found at 86–203; sequence VQKIFNGYLS…TSVVAFPSDP (118 aa). N109 is a glycosylation site (N-linked (GlcNAc...) asparagine). C214 and C244 form a disulfide bridge. 2 consecutive CUB domains span residues 214–334 and 340–447; these read CSFA…FFQL and CGGY…FLSF. N-linked (GlcNAc...) asparagine glycans are attached at residues N302 and N365. 15 disulfides stabilise this stretch: C340-C366, C397-C410, C453-C464, C459-C477, C471-C486, C488-C501, C496-C514, C508-C523, C525-C537, C532-C550, C544-C559, C567-C579, C574-C593, C587-C602, and C641-C657. LDL-receptor class A domains follow at residues 452 to 487, 487 to 524, 524 to 560, and 566 to 603; these read PCPG…LDCK, KCNA…EGCS, SCPP…AKCQ, and PCTE…KDCD. A glycan (N-linked (GlcNAc...) asparagine) is linked at N489. The 240-residue stretch at 615–854 folds into the Peptidase S1 domain; it reads VVGGENSDQG…FRDWIKAQIG (240 aa). Active-site charge relay system residues include H656 and D711. N-linked (GlcNAc...) asparagine glycosylation occurs at N772. Cystine bridges form between C776–C790 and C801–C830. S805 functions as the Charge relay system in the catalytic mechanism.

Belongs to the peptidase S1 family. As to quaternary structure, interacts with CDCP1. May interact with TMEFF1.

It localises to the membrane. The enzyme catalyses Cleaves various synthetic substrates with Arg or Lys at the P1 position and prefers small side-chain amino acids, such as Ala and Gly, at the P2 position.. Functionally, exhibits trypsin-like activity as defined by cleavage of synthetic substrates with Arg or Lys as the P1 site. Involved in the terminal differentiation of keratinocytes through prostasin (PRSS8) activation and filaggrin (FLG) processing. Proteolytically cleaves and therefore activates TMPRSS13. This is Suppressor of tumorigenicity 14 protein homolog (ST14) from Bos taurus (Bovine).